Here is a 176-residue protein sequence, read N- to C-terminus: ATP synthase subunit b 2 (176 aa).

The helical transmembrane segment at 29-49 (IFWLVITLVIIYMVLSKVALP) threads the bilayer.

It belongs to the ATPase B chain family. F-type ATPases have 2 components, F(1) - the catalytic core - and F(0) - the membrane proton channel. F(1) has five subunits: alpha(3), beta(3), gamma(1), delta(1), epsilon(1). F(0) has three main subunits: a(1), b(2) and c(10-14). The alpha and beta chains form an alternating ring which encloses part of the gamma chain. F(1) is attached to F(0) by a central stalk formed by the gamma and epsilon chains, while a peripheral stalk is formed by the delta and b chains.

The protein resides in the cell inner membrane. In terms of biological role, f(1)F(0) ATP synthase produces ATP from ADP in the presence of a proton or sodium gradient. F-type ATPases consist of two structural domains, F(1) containing the extramembraneous catalytic core and F(0) containing the membrane proton channel, linked together by a central stalk and a peripheral stalk. During catalysis, ATP synthesis in the catalytic domain of F(1) is coupled via a rotary mechanism of the central stalk subunits to proton translocation. Its function is as follows. Component of the F(0) channel, it forms part of the peripheral stalk, linking F(1) to F(0). The b'-subunit is a diverged and duplicated form of b found in plants and photosynthetic bacteria. The chain is ATP synthase subunit b 2 (atpF2) from Roseobacter denitrificans (strain ATCC 33942 / OCh 114) (Erythrobacter sp. (strain OCh 114)).